The primary structure comprises 278 residues: 4-hydroxy-tetrahydrodipicolinate reductase (278 aa).

Residues 13–18 (GAAGKM) and 111–113 (GTT) each bind NAD(+). The Proton donor/acceptor role is filled by histidine 167. Histidine 168 provides a ligand contact to (S)-2,3,4,5-tetrahydrodipicolinate. Catalysis depends on lysine 171, which acts as the Proton donor. Residue 177–178 (GT) participates in (S)-2,3,4,5-tetrahydrodipicolinate binding.

The protein belongs to the DapB family.

Its subcellular location is the cytoplasm. It carries out the reaction (S)-2,3,4,5-tetrahydrodipicolinate + NAD(+) + H2O = (2S,4S)-4-hydroxy-2,3,4,5-tetrahydrodipicolinate + NADH + H(+). The enzyme catalyses (S)-2,3,4,5-tetrahydrodipicolinate + NADP(+) + H2O = (2S,4S)-4-hydroxy-2,3,4,5-tetrahydrodipicolinate + NADPH + H(+). Its pathway is amino-acid biosynthesis; L-lysine biosynthesis via DAP pathway; (S)-tetrahydrodipicolinate from L-aspartate: step 4/4. Catalyzes the conversion of 4-hydroxy-tetrahydrodipicolinate (HTPA) to tetrahydrodipicolinate. The sequence is that of 4-hydroxy-tetrahydrodipicolinate reductase from Mastigocladus laminosus (Fischerella sp.).